A 193-amino-acid polypeptide reads, in one-letter code: Ectoine TRAP transporter small permease protein TeaB (193 aa).

The next 4 membrane-spanning stretches (helical) occupy residues 33-55, 65-82, 103-125, and 145-167; these read ILAL…RFAL, VNRI…GYAA, RALM…YYSV, and IFII…LFTA.

It belongs to the TRAP transporter small permease family. In terms of assembly, the complex comprises the extracytoplasmic solute receptor protein TeaA, and the two transmembrane proteins TeaB and TeaC.

It is found in the cell inner membrane. In terms of biological role, part of the tripartite ATP-independent periplasmic (TRAP) transport system TeaABC involved in the uptake of ectoine and hydroxyectoine in response to osmotic upshock. Probably functions as a recovery system for synthesized ectoine that leaks out of the cell. This is Ectoine TRAP transporter small permease protein TeaB (teaB) from Halomonas elongata (strain ATCC 33173 / DSM 2581 / NBRC 15536 / NCIMB 2198 / 1H9).